The following is a 614-amino-acid chain: Glutamyl-tRNA(Gln) amidotransferase subunit E (614 aa).

It belongs to the GatB/GatE family. GatE subfamily. Heterodimer of GatD and GatE.

It carries out the reaction L-glutamyl-tRNA(Gln) + L-glutamine + ATP + H2O = L-glutaminyl-tRNA(Gln) + L-glutamate + ADP + phosphate + H(+). Allows the formation of correctly charged Gln-tRNA(Gln) through the transamidation of misacylated Glu-tRNA(Gln) in organisms which lack glutaminyl-tRNA synthetase. The reaction takes place in the presence of glutamine and ATP through an activated gamma-phospho-Glu-tRNA(Gln). The GatDE system is specific for glutamate and does not act on aspartate. This is Glutamyl-tRNA(Gln) amidotransferase subunit E from Methanospirillum hungatei JF-1 (strain ATCC 27890 / DSM 864 / NBRC 100397 / JF-1).